The sequence spans 286 residues: 4-diphosphocytidyl-2-C-methyl-D-erythritol kinase (286 aa).

K11 is an active-site residue. 93-103 provides a ligand contact to ATP; the sequence is PFGAGLGGGSS. Residue D135 is part of the active site.

This sequence belongs to the GHMP kinase family. IspE subfamily.

The enzyme catalyses 4-CDP-2-C-methyl-D-erythritol + ATP = 4-CDP-2-C-methyl-D-erythritol 2-phosphate + ADP + H(+). It functions in the pathway isoprenoid biosynthesis; isopentenyl diphosphate biosynthesis via DXP pathway; isopentenyl diphosphate from 1-deoxy-D-xylulose 5-phosphate: step 3/6. Functionally, catalyzes the phosphorylation of the position 2 hydroxy group of 4-diphosphocytidyl-2C-methyl-D-erythritol. The chain is 4-diphosphocytidyl-2-C-methyl-D-erythritol kinase from Chlorobium phaeobacteroides (strain BS1).